Reading from the N-terminus, the 240-residue chain is Phosphoribosylaminoimidazole-succinocarboxamide synthase (240 aa).

The protein belongs to the SAICAR synthetase family.

It catalyses the reaction 5-amino-1-(5-phospho-D-ribosyl)imidazole-4-carboxylate + L-aspartate + ATP = (2S)-2-[5-amino-1-(5-phospho-beta-D-ribosyl)imidazole-4-carboxamido]succinate + ADP + phosphate + 2 H(+). The protein operates within purine metabolism; IMP biosynthesis via de novo pathway; 5-amino-1-(5-phospho-D-ribosyl)imidazole-4-carboxamide from 5-amino-1-(5-phospho-D-ribosyl)imidazole-4-carboxylate: step 1/2. The chain is Phosphoribosylaminoimidazole-succinocarboxamide synthase from Wolbachia pipientis wMel.